Consider the following 89-residue polypeptide: Small ribosomal subunit protein uS15 (89 aa).

The protein belongs to the universal ribosomal protein uS15 family. Part of the 30S ribosomal subunit. Forms a bridge to the 50S subunit in the 70S ribosome, contacting the 23S rRNA.

Functionally, one of the primary rRNA binding proteins, it binds directly to 16S rRNA where it helps nucleate assembly of the platform of the 30S subunit by binding and bridging several RNA helices of the 16S rRNA. In terms of biological role, forms an intersubunit bridge (bridge B4) with the 23S rRNA of the 50S subunit in the ribosome. This is Small ribosomal subunit protein uS15 from Prosthecochloris aestuarii (strain DSM 271 / SK 413).